The following is a 489-amino-acid chain: Tripartite motif-containing protein 10 (489 aa).

An RING-type zinc finger spans residues 16-61; that stretch reads CPICQGTLREPVTIDCGHNFCRGCLTRYCEIPGPESEESLSCPLCK. The segment at 94-135 adopts a B box-type zinc-finger fold; that stretch reads EVEDACPEHGEKIYFFCEEDEAQLCVVCRETGQHGAHTVRFL. Cysteine 99, histidine 102, cysteine 121, and histidine 127 together coordinate Zn(2+). A coiled-coil region spans residues 144-180; it reads EQIQKCLVCLRKEREEIQETQSRENKRIQVLLTQVAT. The 195-residue stretch at 292–486 folds into the B30.2/SPRY domain; the sequence is QEMKTFLEKL…FSLSCQEGAV (195 aa).

This sequence belongs to the TRIM/RBCC family. As to quaternary structure, interacts with IFNAR1; this interaction prevents association of IFNAR1 with TYK2. Expressed in embryonic liver.

It localises to the cytoplasm. Functionally, E3 ligase that plays an essential role in the differentiation and survival of terminal erythroid cells. May directly bind to PTEN and promote its ubiquitination, resulting in its proteasomal degradation and activation of hypertrophic signaling. In addition, plays a role in immune response regulation by repressing the phosphorylation of STAT1 and STAT2 in the interferon/JAK/STAT signaling pathway independent of its E3 ligase activity. Mechanistically, interacts with the intracellular domain of IFNAR1 and thereby inhibits the association between TYK2 and IFNAR1. The sequence is that of Tripartite motif-containing protein 10 (Trim10) from Mus musculus (Mouse).